We begin with the raw amino-acid sequence, 159 residues long: Putative viral CXC chemokine 2 (159 aa).

2 disulfide bridges follow: Cys50-Cys77 and Cys52-Cys93.

This sequence belongs to the intercrine alpha (chemokine CxC) family.

This chain is Putative viral CXC chemokine 2 (UL147), found in Human cytomegalovirus (strain Merlin) (HHV-5).